A 71-amino-acid chain; its full sequence is MPSVKLKENEPFDFALRRFKRSCEKAGVLAEVRRREFYEKPTSVRKRKAAAAVKRHAKKVQRENRKFQRLY.

A compositionally biased stretch (basic residues) spans 48–59 (KAAAAVKRHAKK). Residues 48-71 (KAAAAVKRHAKKVQRENRKFQRLY) are disordered. Over residues 60 to 71 (VQRENRKFQRLY) the composition is skewed to basic and acidic residues.

This sequence belongs to the bacterial ribosomal protein bS21 family.

The protein is Small ribosomal subunit protein bS21 of Teredinibacter turnerae (strain ATCC 39867 / T7901).